The following is a 156-amino-acid chain: Snaclec subunit B (156 aa).

The signal sequence occupies residues 1-23; that stretch reads MGRSIFVNLGLLVVAFSLRGSEA. Intrachain disulfides connect C25–C36, C53–C144, and C119–C136. In terms of domain architecture, C-type lectin spans 32–145; that stretch reads YDKYCYKVFD…CKSTLPFTCK (114 aa).

Belongs to the snaclec family. In terms of assembly, heterodimer of subunits A and B; disulfide-linked. Expressed by the venom gland.

It localises to the secreted. Interferes with one step of hemostasis (modulation of platelet aggregation, or coagulation cascade, for example). This is Snaclec subunit B from Philodryas olfersii (Green snake).